The sequence spans 969 residues: RNA polymerase-associated protein RapA (969 aa).

The Helicase ATP-binding domain maps to 164–334 (EVGRRHAPRV…FARLRLLDAD (171 aa)). An ATP-binding site is contributed by 177-184 (DEVGLGKT). The DEAH box signature appears at 280–283 (DEAH). Residues 492 to 646 (RVNWLLEKVK…TCPTGRAVYD (155 aa)) enclose the Helicase C-terminal domain.

Belongs to the SNF2/RAD54 helicase family. RapA subfamily. In terms of assembly, interacts with the RNAP. Has a higher affinity for the core RNAP than for the holoenzyme. Its ATPase activity is stimulated by binding to RNAP.

Its function is as follows. Transcription regulator that activates transcription by stimulating RNA polymerase (RNAP) recycling in case of stress conditions such as supercoiled DNA or high salt concentrations. Probably acts by releasing the RNAP, when it is trapped or immobilized on tightly supercoiled DNA. Does not activate transcription on linear DNA. Probably not involved in DNA repair. This chain is RNA polymerase-associated protein RapA, found in Vibrio cholerae serotype O1 (strain ATCC 39315 / El Tor Inaba N16961).